We begin with the raw amino-acid sequence, 143 residues long: Antitumor antibiotic C-1027 apoprotein (143 aa).

The N-terminal stretch at 1 to 33 is a signal peptide; sequence MSLRHMSRRASRFGVVAVASIGLAAAAQSVAFA. 2 disulfides stabilise this stretch: cysteine 69/cysteine 78 and cysteine 119/cysteine 124.

This sequence belongs to the neocarzinostatin family.

Its function is as follows. Binds non-covalently to a chromophore which is the cytotoxic and mutagenic component of the antibiotic. The chromophore binds to DNA as a weak intercalator and causes single- and double-strand breaks. The chain is Antitumor antibiotic C-1027 apoprotein (cagA) from Streptomyces globisporus.